The following is a 327-amino-acid chain: Aspartate carbamoyltransferase catalytic subunit (327 aa).

Carbamoyl phosphate is bound by residues R73 and T74. L-aspartate is bound at residue K101. R123, H153, and Q156 together coordinate carbamoyl phosphate. The L-aspartate site is built by R186 and R241. Carbamoyl phosphate contacts are provided by G282 and P283.

It belongs to the aspartate/ornithine carbamoyltransferase superfamily. ATCase family. As to quaternary structure, heterododecamer (2C3:3R2) of six catalytic PyrB chains organized as two trimers (C3), and six regulatory PyrI chains organized as three dimers (R2).

It carries out the reaction carbamoyl phosphate + L-aspartate = N-carbamoyl-L-aspartate + phosphate + H(+). It functions in the pathway pyrimidine metabolism; UMP biosynthesis via de novo pathway; (S)-dihydroorotate from bicarbonate: step 2/3. Functionally, catalyzes the condensation of carbamoyl phosphate and aspartate to form carbamoyl aspartate and inorganic phosphate, the committed step in the de novo pyrimidine nucleotide biosynthesis pathway. This is Aspartate carbamoyltransferase catalytic subunit from Acidithiobacillus ferrooxidans (strain ATCC 23270 / DSM 14882 / CIP 104768 / NCIMB 8455) (Ferrobacillus ferrooxidans (strain ATCC 23270)).